Reading from the N-terminus, the 349-residue chain is N-acetyl-gamma-glutamyl-phosphate reductase (349 aa).

Cys149 is an active-site residue.

It belongs to the NAGSA dehydrogenase family. Type 1 subfamily.

The protein localises to the cytoplasm. The catalysed reaction is N-acetyl-L-glutamate 5-semialdehyde + phosphate + NADP(+) = N-acetyl-L-glutamyl 5-phosphate + NADPH + H(+). It participates in amino-acid biosynthesis; L-arginine biosynthesis; N(2)-acetyl-L-ornithine from L-glutamate: step 3/4. Catalyzes the NADPH-dependent reduction of N-acetyl-5-glutamyl phosphate to yield N-acetyl-L-glutamate 5-semialdehyde. The chain is N-acetyl-gamma-glutamyl-phosphate reductase from Acinetobacter baumannii (strain ACICU).